A 212-amino-acid chain; its full sequence is Large ribosomal subunit protein uL3 (212 aa).

The disordered stretch occupies residues 135–161 (MTHGNSLSHRAPGSIGQNQSPGKVFKG). Gln153 carries the N5-methylglutamine modification.

It belongs to the universal ribosomal protein uL3 family. In terms of assembly, part of the 50S ribosomal subunit. Forms a cluster with proteins L14 and L19. Methylated by PrmB.

Its function is as follows. One of the primary rRNA binding proteins, it binds directly near the 3'-end of the 23S rRNA, where it nucleates assembly of the 50S subunit. The chain is Large ribosomal subunit protein uL3 from Alteromonas mediterranea (strain DSM 17117 / CIP 110805 / LMG 28347 / Deep ecotype).